Here is a 258-residue protein sequence, read N- to C-terminus: RBPJ-interacting and tubulin-associated protein 1 (258 aa).

Disordered stretches follow at residues 28–86, 132–182, and 195–258; these read FGSP…PRKK, TPPA…APRS, and AVPS…PPWK. A compositionally biased stretch (polar residues) spans 71–81; the sequence is SPSSRGSTPNL. The short motif at 81 to 97 is the Nuclear localization signal element; that stretch reads LTPRKKNKYRLIGHTPS. Residues 117–145 are interaction with RBPJ/RBPSUH; it reads RTAVEDAAKLRTLFWTPPATPRGSHSPRP. The interval 145–258 is interaction with tubulin; it reads PRETPLRAIH…CPQKPKPPWK (114 aa). Composition is skewed to polar residues over residues 201 to 212 and 236 to 245; these read HPASTAPQTNGP and GSVSGPTTPQ.

The protein belongs to the RITA family. As to quaternary structure, interacts with RBPJ/RBPSUH.

The protein localises to the cytoplasm. The protein resides in the nucleus. Its subcellular location is the cytoskeleton. It localises to the microtubule organizing center. It is found in the centrosome. Tubulin-binding protein that acts as a negative regulator of Notch signaling pathway. Shuttles between the cytoplasm and the nucleus and mediates the nuclear export of RBPJ/RBPSUH, thereby preventing the interaction between RBPJ/RBPSUH and NICD product of Notch proteins (Notch intracellular domain), leading to down-regulate Notch-mediated transcription. May play a role in neurogenesis. This is RBPJ-interacting and tubulin-associated protein 1 (Rita1) from Rattus norvegicus (Rat).